Consider the following 192-residue polypeptide: Peptide deformylase 1 (192 aa).

Residues Cys101 and His143 each coordinate Fe cation. Glu144 is an active-site residue. Position 147 (His147) interacts with Fe cation.

This sequence belongs to the polypeptide deformylase family. It depends on Fe(2+) as a cofactor.

The catalysed reaction is N-terminal N-formyl-L-methionyl-[peptide] + H2O = N-terminal L-methionyl-[peptide] + formate. Its function is as follows. Removes the formyl group from the N-terminal Met of newly synthesized proteins. Requires at least a dipeptide for an efficient rate of reaction. N-terminal L-methionine is a prerequisite for activity but the enzyme has broad specificity at other positions. In Prochlorococcus marinus (strain MIT 9313), this protein is Peptide deformylase 1.